We begin with the raw amino-acid sequence, 77 residues long: Putative defensin-like protein 30 (77 aa).

Residues 1–26 (MASSSKCAFLVFLCMIVLLAPSEVHA) form the signal peptide. Disulfide bonds link cysteine 43–cysteine 63, cysteine 49–cysteine 72, and cysteine 53–cysteine 74.

This sequence belongs to the DEFL family.

It localises to the secreted. This Arabidopsis thaliana (Mouse-ear cress) protein is Putative defensin-like protein 30.